The primary structure comprises 438 residues: MQVTVEKKEGIHCSLLIEVPANEIDSVVSKEINRTAKTIKMDGFRPGKVPAGMVKKKYGEQIRMEVISDLIPQKYSKAIQDEKLAVAGIEVELKENKEGQPLKFVANLELFPEFEVTGFEKIEVQKPVVELTDKEVKQMIENLRKQFATFSEVDKVVEKDDKVTIDFVGKKDGEAFEGGTANDIDVIIGSGQMIPGFEDGIIGMKKGEQKTITVTFPQDYQNKDLAEAETTFDITVKKIQQAELPEVNDEFVKKFGVKGGVDTFENEIKENMQRELKFILQRKVKDQVFKGLREIAEFETPKSLIKREIDAAKQNLLKQMGGAKGFDVNQLSDNLFEANAKQKVETSLILDSIMNSQEFKAEEAEVESLLDELVQAYEEPEKTKEQIKKNDKEIANLKALVIENKLTDWVLEQAKVTEKTEDFFEVIKENMQAQQAGF.

Residues Asp-160–Pro-245 form the PPIase FKBP-type domain.

Belongs to the FKBP-type PPIase family. Tig subfamily.

It is found in the cytoplasm. It carries out the reaction [protein]-peptidylproline (omega=180) = [protein]-peptidylproline (omega=0). In terms of biological role, involved in protein export. Acts as a chaperone by maintaining the newly synthesized protein in an open conformation. Functions as a peptidyl-prolyl cis-trans isomerase. The protein is Trigger factor of Francisella tularensis subsp. tularensis (strain FSC 198).